A 248-amino-acid polypeptide reads, in one-letter code: Meiotically up-regulated gene 65 protein (248 aa).

Has a role in meiosis. The sequence is that of Meiotically up-regulated gene 65 protein (mug65) from Schizosaccharomyces pombe (strain 972 / ATCC 24843) (Fission yeast).